A 294-amino-acid polypeptide reads, in one-letter code: 4-hydroxy-tetrahydrodipicolinate synthase (294 aa).

Residue Thr47 coordinates pyruvate. Tyr135 functions as the Proton donor/acceptor in the catalytic mechanism. The active-site Schiff-base intermediate with substrate is Lys163. Thr205 provides a ligand contact to pyruvate.

Belongs to the DapA family. Homotetramer; dimer of dimers.

It is found in the cytoplasm. It carries out the reaction L-aspartate 4-semialdehyde + pyruvate = (2S,4S)-4-hydroxy-2,3,4,5-tetrahydrodipicolinate + H2O + H(+). Its pathway is amino-acid biosynthesis; L-lysine biosynthesis via DAP pathway; (S)-tetrahydrodipicolinate from L-aspartate: step 3/4. In terms of biological role, catalyzes the condensation of (S)-aspartate-beta-semialdehyde [(S)-ASA] and pyruvate to 4-hydroxy-tetrahydrodipicolinate (HTPA). The chain is 4-hydroxy-tetrahydrodipicolinate synthase from Rickettsia africae (strain ESF-5).